We begin with the raw amino-acid sequence, 364 residues long: DNA replication and repair protein RecF (364 aa).

Residue 30 to 37 coordinates ATP; sequence GNNGQGKT.

Belongs to the RecF family.

The protein localises to the cytoplasm. The RecF protein is involved in DNA metabolism; it is required for DNA replication and normal SOS inducibility. RecF binds preferentially to single-stranded, linear DNA. It also seems to bind ATP. This is DNA replication and repair protein RecF from Citrifermentans bemidjiense (strain ATCC BAA-1014 / DSM 16622 / JCM 12645 / Bem) (Geobacter bemidjiensis).